A 251-amino-acid chain; its full sequence is Flap endonuclease Xni (251 aa).

Residue Asp-104 coordinates Mg(2+). A 5'-3' exonuclease domain is found at 160 to 249; that stretch reads VQPQQLPDYW…IDGNLQQLRL (90 aa). K(+)-binding residues include Leu-171, Ala-172, Pro-180, Val-182, and Ile-185. An interaction with DNA region spans residues 184–189; the sequence is GIGPKS.

The protein belongs to the Xni family. Mg(2+) serves as cofactor. It depends on K(+) as a cofactor.

Its function is as follows. Has flap endonuclease activity. During DNA replication, flap endonucleases cleave the 5'-overhanging flap structure that is generated by displacement synthesis when DNA polymerase encounters the 5'-end of a downstream Okazaki fragment. The sequence is that of Flap endonuclease Xni from Escherichia coli O81 (strain ED1a).